The chain runs to 381 residues: Acetyl-CoA:oxalate CoA-transferase (381 aa).

Residue histidine 233 is part of the active site.

Belongs to the CoA-transferase III family. Homodimer.

It carries out the reaction oxalate + acetyl-CoA = oxalyl-CoA + acetate. Its function is as follows. Involved in the catabolism of oxalate and in the adapatation to low pH. ACOCT serves to prime the oxalate-induced acid tolerance response (ATR) cycle by producing substrate for oxalyl-CoA decarboxylase (OXC) and formyl-coenzyme A transferase (FCOCT). Catalyzes the reversible conversion of acetyl-CoA and oxalate to oxalyl-CoA and acetate. It can also use formyl-CoA and oxalate to produce oxalyl-CoA and formate with significantly reduced specific activity. The sequence is that of Acetyl-CoA:oxalate CoA-transferase (yfdE) from Escherichia coli (strain K12).